We begin with the raw amino-acid sequence, 453 residues long: Chromosomal replication initiator protein DnaA (453 aa).

Residues 1–74 are domain I, interacts with DnaA modulators; the sequence is MKEKQFWNRI…GFEIYDAEIT (74 aa). The domain II stretch occupies residues 74-113; that stretch reads TPHYIFTKPQDTTSSQVEEATNLTLYDYSPKLVSIPYSDT. The interval 114–331 is domain III, AAA+ region; sequence GLKEKYTFDN…GAINDITLIA (218 aa). Residues glycine 158, glycine 160, lysine 161, and threonine 162 each contribute to the ATP site. Residues 332–453 are domain IV, binds dsDNA; the sequence is RVKKIKDITI…EIESIKKKIK (122 aa).

The protein belongs to the DnaA family. In terms of assembly, oligomerizes as a right-handed, spiral filament on DNA at oriC.

The protein resides in the cytoplasm. Plays an essential role in the initiation and regulation of chromosomal replication. ATP-DnaA binds to the origin of replication (oriC) to initiate formation of the DNA replication initiation complex once per cell cycle. Binds the DnaA box (a 9 base pair repeat at the origin) and separates the double-stranded (ds)DNA. Forms a right-handed helical filament on oriC DNA; dsDNA binds to the exterior of the filament while single-stranded (ss)DNA is stabiized in the filament's interior. The ATP-DnaA-oriC complex binds and stabilizes one strand of the AT-rich DNA unwinding element (DUE), permitting loading of DNA polymerase. After initiation quickly degrades to an ADP-DnaA complex that is not apt for DNA replication. Binds acidic phospholipids. The chain is Chromosomal replication initiator protein DnaA from Streptococcus pneumoniae (strain Taiwan19F-14).